The sequence spans 417 residues: Serine hydroxymethyltransferase 1 (417 aa).

(6S)-5,6,7,8-tetrahydrofolate-binding positions include Leu-121 and 125 to 127 (GHL). Position 230 is an N6-(pyridoxal phosphate)lysine (Lys-230). 355–357 (SPF) contributes to the (6S)-5,6,7,8-tetrahydrofolate binding site.

This sequence belongs to the SHMT family. Homodimer. The cofactor is pyridoxal 5'-phosphate.

It localises to the cytoplasm. It catalyses the reaction (6R)-5,10-methylene-5,6,7,8-tetrahydrofolate + glycine + H2O = (6S)-5,6,7,8-tetrahydrofolate + L-serine. It participates in one-carbon metabolism; tetrahydrofolate interconversion. Its pathway is amino-acid biosynthesis; glycine biosynthesis; glycine from L-serine: step 1/1. In terms of biological role, catalyzes the reversible interconversion of serine and glycine with tetrahydrofolate (THF) serving as the one-carbon carrier. This reaction serves as the major source of one-carbon groups required for the biosynthesis of purines, thymidylate, methionine, and other important biomolecules. Also exhibits THF-independent aldolase activity toward beta-hydroxyamino acids, producing glycine and aldehydes, via a retro-aldol mechanism. The protein is Serine hydroxymethyltransferase 1 of Pseudomonas aeruginosa (strain ATCC 15692 / DSM 22644 / CIP 104116 / JCM 14847 / LMG 12228 / 1C / PRS 101 / PAO1).